A 155-amino-acid chain; its full sequence is UPF0178 protein RPC_3085 (155 aa).

The protein belongs to the UPF0178 family.

In Rhodopseudomonas palustris (strain BisB18), this protein is UPF0178 protein RPC_3085.